The following is a 40-amino-acid chain: Photosystem II reaction center protein J (40 aa).

A helical transmembrane segment spans residues 8-28; sequence IPLWLIGTVTGIPVIGLVGIF.

Belongs to the PsbJ family. As to quaternary structure, PSII is composed of 1 copy each of membrane proteins PsbA, PsbB, PsbC, PsbD, PsbE, PsbF, PsbH, PsbI, PsbJ, PsbK, PsbL, PsbM, PsbT, PsbX, PsbY, PsbZ, Psb30/Ycf12, at least 3 peripheral proteins of the oxygen-evolving complex and a large number of cofactors. It forms dimeric complexes.

Its subcellular location is the plastid. It is found in the chloroplast thylakoid membrane. In terms of biological role, one of the components of the core complex of photosystem II (PSII). PSII is a light-driven water:plastoquinone oxidoreductase that uses light energy to abstract electrons from H(2)O, generating O(2) and a proton gradient subsequently used for ATP formation. It consists of a core antenna complex that captures photons, and an electron transfer chain that converts photonic excitation into a charge separation. The protein is Photosystem II reaction center protein J of Cucumis sativus (Cucumber).